The following is a 211-amino-acid chain: Protein-L-isoaspartate O-methyltransferase (211 aa).

Serine 62 is a catalytic residue.

The protein belongs to the methyltransferase superfamily. L-isoaspartyl/D-aspartyl protein methyltransferase family.

It localises to the cytoplasm. The enzyme catalyses [protein]-L-isoaspartate + S-adenosyl-L-methionine = [protein]-L-isoaspartate alpha-methyl ester + S-adenosyl-L-homocysteine. In terms of biological role, catalyzes the methyl esterification of L-isoaspartyl residues in peptides and proteins that result from spontaneous decomposition of normal L-aspartyl and L-asparaginyl residues. It plays a role in the repair and/or degradation of damaged proteins. The sequence is that of Protein-L-isoaspartate O-methyltransferase from Shewanella amazonensis (strain ATCC BAA-1098 / SB2B).